The chain runs to 475 residues: Glutamate--tRNA ligase 1 (475 aa).

The 'HIGH' region signature appears at 11-21 (PSPTGYLHIGG). Residues 240-244 (KLSKR) carry the 'KMSKS' region motif. Lys-243 contributes to the ATP binding site.

It belongs to the class-I aminoacyl-tRNA synthetase family. Glutamate--tRNA ligase type 1 subfamily. Monomer.

Its subcellular location is the cytoplasm. It catalyses the reaction tRNA(Glu) + L-glutamate + ATP = L-glutamyl-tRNA(Glu) + AMP + diphosphate. Its function is as follows. Catalyzes the attachment of glutamate to tRNA(Glu) in a two-step reaction: glutamate is first activated by ATP to form Glu-AMP and then transferred to the acceptor end of tRNA(Glu). The chain is Glutamate--tRNA ligase 1 from Methylobacterium radiotolerans (strain ATCC 27329 / DSM 1819 / JCM 2831 / NBRC 15690 / NCIMB 10815 / 0-1).